The chain runs to 143 residues: Transcription antitermination protein NusB (143 aa).

The protein belongs to the NusB family.

In terms of biological role, involved in transcription antitermination. Required for transcription of ribosomal RNA (rRNA) genes. Binds specifically to the boxA antiterminator sequence of the ribosomal RNA (rrn) operons. In Desulforamulus reducens (strain ATCC BAA-1160 / DSM 100696 / MI-1) (Desulfotomaculum reducens), this protein is Transcription antitermination protein NusB.